Here is a 446-residue protein sequence, read N- to C-terminus: Signal recognition particle 54 kDa protein (446 aa).

GTP contacts are provided by residues 104 to 111 (GLQGSGKT), 184 to 188 (DTAGR), and 242 to 245 (TKMD).

Belongs to the GTP-binding SRP family. SRP54 subfamily. Part of the signal recognition particle protein translocation system, which is composed of SRP and FtsY. Archaeal SRP consists of a 7S RNA molecule of 300 nucleotides and two protein subunits: SRP54 and SRP19.

Its subcellular location is the cytoplasm. The enzyme catalyses GTP + H2O = GDP + phosphate + H(+). Functionally, involved in targeting and insertion of nascent membrane proteins into the cytoplasmic membrane. Binds to the hydrophobic signal sequence of the ribosome-nascent chain (RNC) as it emerges from the ribosomes. The SRP-RNC complex is then targeted to the cytoplasmic membrane where it interacts with the SRP receptor FtsY. The protein is Signal recognition particle 54 kDa protein of Methanocorpusculum labreanum (strain ATCC 43576 / DSM 4855 / Z).